The sequence spans 1412 residues: DNA-directed RNA polymerase subunit beta' (1412 aa).

4 residues coordinate Zn(2+): C70, C72, C85, and C88. The Mg(2+) site is built by D460, D462, and D464. Zn(2+) contacts are provided by C819, C893, C900, and C903. Positions 1393-1412 (EAFEFGTPSAPAEEPQHPAE) are disordered.

Belongs to the RNA polymerase beta' chain family. The RNAP catalytic core consists of 2 alpha, 1 beta, 1 beta' and 1 omega subunit. When a sigma factor is associated with the core the holoenzyme is formed, which can initiate transcription. The cofactor is Mg(2+). It depends on Zn(2+) as a cofactor.

The enzyme catalyses RNA(n) + a ribonucleoside 5'-triphosphate = RNA(n+1) + diphosphate. Functionally, DNA-dependent RNA polymerase catalyzes the transcription of DNA into RNA using the four ribonucleoside triphosphates as substrates. The polypeptide is DNA-directed RNA polymerase subunit beta' (Burkholderia pseudomallei (strain 1106a)).